A 190-amino-acid polypeptide reads, in one-letter code: MAEKTQKSVKIAPGAVVCVESEIRGDVTIGPRTVIHPKARIIAEAGPIVIGEGNLIEEQALIINAHPDNITPDAEDPEPKPMIIGTNNVFEVGCYCQAMKIGDNNVIESKAYVGRNVILTSGCIIGACCNLNTFEVIPENTVIYGGDCLRRVQTERPQPQTLQLDFLMKILPNYHHLKKTMKGSSTPVKN.

The residue at position 186 (Thr186) is a Phosphothreonine; by CDK1.

It belongs to the dynactin subunits 5/6 family. Dynactin subunit 6 subfamily. In terms of assembly, subunit of dynactin, a multiprotein complex part of a tripartite complex with dynein and a adapter, such as BICDL1, BICD2 or HOOK3. The dynactin complex is built around ACTR1A/ACTB filament and consists of an actin-related filament composed of a shoulder domain, a pointed end and a barbed end. Its length is defined by its flexible shoulder domain. The soulder is composed of 2 DCTN1 subunits, 4 DCTN2 and 2 DCTN3. The 4 DCNT2 (via N-terminus) bind the ACTR1A filament and act as molecular rulers to determine the length. The pointed end is important for binding dynein-dynactin cargo adapters. Consists of 4 subunits: ACTR10, DCNT4, DCTN5 and DCTN6. Within the complex DCTN6 forms a heterodimer with DCTN5. The barbed end is composed of a CAPZA1:CAPZB heterodimers, which binds ACTR1A/ACTB filament and dynactin and stabilizes dynactin. Interacts with PLK1. Interacts with N4BP2L1. In terms of processing, phosphorylation at Thr-186 by CDK1 during mitotic prometaphase creates a binding site for PLK1 that facilitates its recruitment to kinetochores.

Its subcellular location is the cytoplasm. It is found in the cytoskeleton. It localises to the chromosome. The protein localises to the centromere. The protein resides in the kinetochore. Functionally, part of the dynactin complex that activates the molecular motor dynein for ultra-processive transport along microtubules. This is Dynactin subunit 6 (DCTN6) from Bos taurus (Bovine).